Here is a 295-residue protein sequence, read N- to C-terminus: MESGDLRVFQMVAREGTITKAALQLGYVQSNVTARIQQLEAELGTTLFLRHNRGMTLSASGKLLLDYANKIIGLLDEASKALSSSAEPSGPLMIGCTQTTAAVRLPKLLASYYEEHPNVQLSLTTGHTQFLLDKVLRYELDGAFIGCECHHPELESYPAFEEEPVVVSAASVPDVEEAITKPILVYSTGCSYRETLEKWLRSVGVTQPVIMEFGTLEAIIGGVTAGLGISLLPRTVVQKHEAEGSIRLYPLPEALSQMKTEFIVRKDSFISSALRTFMDSFTPVKTAESQKSSLL.

The HTH lysR-type domain occupies 1 to 58 (MESGDLRVFQMVAREGTITKAALQLGYVQSNVTARIQQLEAELGTTLFLRHNRGMTLS). The H-T-H motif DNA-binding region spans 18–37 (ITKAALQLGYVQSNVTARIQ).

It belongs to the LysR transcriptional regulatory family.

This is an uncharacterized protein from Bacillus subtilis (strain 168).